The following is a 398-amino-acid chain: Spermatogenesis associated 6-like protein (398 aa).

The segment at 170–215 (KLNGPANNRKKKPKEKNSDQLSKGTPFWGPSPQRLHLHRPTQRNPG) is disordered. Ser-269 and Ser-272 each carry phosphoserine.

Belongs to the SPATA6 family.

The protein is Spermatogenesis associated 6-like protein (Spata6l) of Rattus norvegicus (Rat).